A 208-amino-acid chain; its full sequence is Uracil phosphoribosyltransferase (208 aa).

5-phospho-alpha-D-ribose 1-diphosphate is bound by residues Arg-78, Arg-103, and 130–138 (DPMLATGGS). Uracil-binding positions include Ile-193 and 198 to 200 (GDA). Asp-199 contacts 5-phospho-alpha-D-ribose 1-diphosphate.

It belongs to the UPRTase family. Mg(2+) is required as a cofactor.

It catalyses the reaction UMP + diphosphate = 5-phospho-alpha-D-ribose 1-diphosphate + uracil. Its pathway is pyrimidine metabolism; UMP biosynthesis via salvage pathway; UMP from uracil: step 1/1. Allosterically activated by GTP. In terms of biological role, catalyzes the conversion of uracil and 5-phospho-alpha-D-ribose 1-diphosphate (PRPP) to UMP and diphosphate. This chain is Uracil phosphoribosyltransferase, found in Shewanella frigidimarina (strain NCIMB 400).